Here is a 280-residue protein sequence, read N- to C-terminus: uncharacterized protein (280 aa).

This sequence belongs to the metallo-dependent hydrolases superfamily.

This is an uncharacterized protein from Methanocaldococcus jannaschii (strain ATCC 43067 / DSM 2661 / JAL-1 / JCM 10045 / NBRC 100440) (Methanococcus jannaschii).